Reading from the N-terminus, the 130-residue chain is Small ribosomal subunit protein uS8 (130 aa).

It belongs to the universal ribosomal protein uS8 family. In terms of assembly, part of the 30S ribosomal subunit. Contacts proteins S5 and S12.

Functionally, one of the primary rRNA binding proteins, it binds directly to 16S rRNA central domain where it helps coordinate assembly of the platform of the 30S subunit. The protein is Small ribosomal subunit protein uS8 of Saccharophagus degradans (strain 2-40 / ATCC 43961 / DSM 17024).